The chain runs to 236 residues: Leucyl/phenylalanyl-tRNA--protein transferase (236 aa).

This sequence belongs to the L/F-transferase family.

It localises to the cytoplasm. The catalysed reaction is N-terminal L-lysyl-[protein] + L-leucyl-tRNA(Leu) = N-terminal L-leucyl-L-lysyl-[protein] + tRNA(Leu) + H(+). It carries out the reaction N-terminal L-arginyl-[protein] + L-leucyl-tRNA(Leu) = N-terminal L-leucyl-L-arginyl-[protein] + tRNA(Leu) + H(+). The enzyme catalyses L-phenylalanyl-tRNA(Phe) + an N-terminal L-alpha-aminoacyl-[protein] = an N-terminal L-phenylalanyl-L-alpha-aminoacyl-[protein] + tRNA(Phe). Functionally, functions in the N-end rule pathway of protein degradation where it conjugates Leu, Phe and, less efficiently, Met from aminoacyl-tRNAs to the N-termini of proteins containing an N-terminal arginine or lysine. The polypeptide is Leucyl/phenylalanyl-tRNA--protein transferase (Shewanella putrefaciens (strain CN-32 / ATCC BAA-453)).